Reading from the N-terminus, the 77-residue chain is Small ribosomal subunit protein uS17 (77 aa).

Belongs to the universal ribosomal protein uS17 family. In terms of assembly, part of the 30S ribosomal subunit.

One of the primary rRNA binding proteins, it binds specifically to the 5'-end of 16S ribosomal RNA. The polypeptide is Small ribosomal subunit protein uS17 (Rickettsia rickettsii (strain Sheila Smith)).